The chain runs to 415 residues: NEDD8-specific protease 2 (415 aa).

A disordered region spans residues 1 to 42 (MRSNSIFTKEIDSEAVKKSSNLRPPSTGSSNSNGSDTASPKK). The segment covering 26–38 (STGSSNSNGSDTA) has biased composition (low complexity). Ser35 is modified (phosphoserine). Catalysis depends on residues His171, Asp188, and Cys229. Residues 320–415 (AVTSDSAQPH…QHTQQSIEIH (96 aa)) form a disordered region. Composition is skewed to polar residues over residues 335 to 368 (MPSS…NSSP), 379 to 390 (TASTSVLPTSIL), and 405 to 415 (IQHTQQSIEIH). Ser367 is subject to Phosphoserine.

It belongs to the peptidase C48 family.

It is found in the cytoplasm. Its subcellular location is the nucleus. Functionally, protease that catalyzes two essential functions in the NEDD8 pathway: processing of full-length NEDD8 to its mature form and deconjugation of NEDD8 from targeted proteins such as the pcu1, pcu2 and pcu4 cullins and other proteins. Has a role in meiosis. In Schizosaccharomyces pombe (strain 972 / ATCC 24843) (Fission yeast), this protein is NEDD8-specific protease 2 (nep2).